The following is a 312-amino-acid chain: Testis-expressed protein 13B (312 aa).

It belongs to the TEX13 family. In terms of tissue distribution, testis specific.

The chain is Testis-expressed protein 13B (TEX13B) from Homo sapiens (Human).